The primary structure comprises 120 residues: Large ribosomal subunit protein bL12 (120 aa).

The segment covering 95-112 (KEGVSKEEAEEVQGKLEE) has biased composition (basic and acidic residues). Positions 95-120 (KEGVSKEEAEEVQGKLEEAGASVEVK) are disordered.

It belongs to the bacterial ribosomal protein bL12 family. As to quaternary structure, homodimer. Part of the ribosomal stalk of the 50S ribosomal subunit. Forms a multimeric L10(L12)X complex, where L10 forms an elongated spine to which 2 to 4 L12 dimers bind in a sequential fashion. Binds GTP-bound translation factors.

Functionally, forms part of the ribosomal stalk which helps the ribosome interact with GTP-bound translation factors. Is thus essential for accurate translation. This chain is Large ribosomal subunit protein bL12, found in Oceanobacillus iheyensis (strain DSM 14371 / CIP 107618 / JCM 11309 / KCTC 3954 / HTE831).